Reading from the N-terminus, the 283-residue chain is 3-methyl-2-oxobutanoate hydroxymethyltransferase (283 aa).

Asp-46 and Asp-85 together coordinate Mg(2+). Residues 46-47, Asp-85, and Lys-115 contribute to the 3-methyl-2-oxobutanoate site; that span reads DS. Glu-117 is a Mg(2+) binding site. Catalysis depends on Glu-184, which acts as the Proton acceptor.

The protein belongs to the PanB family. In terms of assembly, homodecamer; pentamer of dimers. Mg(2+) is required as a cofactor.

It is found in the cytoplasm. The enzyme catalyses 3-methyl-2-oxobutanoate + (6R)-5,10-methylene-5,6,7,8-tetrahydrofolate + H2O = 2-dehydropantoate + (6S)-5,6,7,8-tetrahydrofolate. The protein operates within cofactor biosynthesis; (R)-pantothenate biosynthesis; (R)-pantoate from 3-methyl-2-oxobutanoate: step 1/2. Functionally, catalyzes the reversible reaction in which hydroxymethyl group from 5,10-methylenetetrahydrofolate is transferred onto alpha-ketoisovalerate to form ketopantoate. This Acetivibrio thermocellus (strain ATCC 27405 / DSM 1237 / JCM 9322 / NBRC 103400 / NCIMB 10682 / NRRL B-4536 / VPI 7372) (Clostridium thermocellum) protein is 3-methyl-2-oxobutanoate hydroxymethyltransferase.